Consider the following 528-residue polypeptide: Na(+)/H(+) antiporter NhaB (528 aa).

A run of 10 helical transmembrane segments spans residues 20-39 (WFKI…FYFN), 66-86 (PGGL…SQVL), 97-117 (LLLV…LFVF), 139-159 (AFLS…TVAV), 241-261 (IRMS…CFLV), 304-324 (AVIG…VGLI), 349-369 (EEAL…AVII), 390-410 (LVIF…VFVG), 448-468 (ATPN…APLI), and 476-496 (VWMA…AIQL).

This sequence belongs to the NhaB Na(+)/H(+) (TC 2.A.34) antiporter family.

Its subcellular location is the cell inner membrane. The catalysed reaction is 2 Na(+)(in) + 3 H(+)(out) = 2 Na(+)(out) + 3 H(+)(in). Na(+)/H(+) antiporter that extrudes sodium in exchange for external protons. In Shewanella pealeana (strain ATCC 700345 / ANG-SQ1), this protein is Na(+)/H(+) antiporter NhaB.